Here is a 140-residue protein sequence, read N- to C-terminus: Protein archease (140 aa).

Residues Asp11, Asp139, and Leu140 each contribute to the Ca(2+) site.

Belongs to the archease family.

Functionally, activates the tRNA-splicing ligase complex by facilitating the enzymatic turnover of catalytic subunit RtcB. Acts by promoting the guanylylation of RtcB, a key intermediate step in tRNA ligation. Can also alter the NTP specificity of RtcB such that ATP, dGTP or ITP is used efficiently. The chain is Protein archease from Methanopyrus kandleri (strain AV19 / DSM 6324 / JCM 9639 / NBRC 100938).